Consider the following 192-residue polypeptide: uncharacterized protein (192 aa).

One can recognise a Nudix hydrolase domain in the interval Gln29–Ser160. A Nudix box motif is present at residues Gly67 to Ala89. Mg(2+) contacts are provided by Glu83 and Glu87.

This sequence belongs to the Nudix hydrolase family. PCD1 subfamily. Mn(2+) is required as a cofactor. Mg(2+) serves as cofactor.

Its function is as follows. Probably mediates the hydrolysis of some nucleoside diphosphate derivatives. This is an uncharacterized protein from Salmonella agona (strain SL483).